Here is a 248-residue protein sequence, read N- to C-terminus: Anamorsin homolog (248 aa).

Residues F4–F129 form an N-terminal SAM-like domain region. Positions A130 to K161 are linker. Residues C172, C181, C184, and C186 each contribute to the [2Fe-2S] cluster site. Residues C172–C186 form a fe-S binding site A region. The [4Fe-4S] cluster site is built by C209, C212, C220, and C223. 2 consecutive short sequence motifs (cx2C motif) follow at residues C209 to C212 and C220 to C223. The segment at C209 to C223 is fe-S binding site B.

This sequence belongs to the anamorsin family. As to quaternary structure, monomer. The cofactor is [2Fe-2S] cluster. [4Fe-4S] cluster is required as a cofactor.

Its subcellular location is the cytoplasm. It is found in the mitochondrion intermembrane space. Its function is as follows. Component of the cytosolic iron-sulfur (Fe-S) protein assembly (CIA) machinery. Required for the maturation of extramitochondrial Fe-S proteins. Part of an electron transfer chain functioning in an early step of cytosolic Fe-S biogenesis, facilitating the de novo assembly of a [4Fe-4S] cluster on the cytosolic Fe-S scaffold complex. Electrons are transferred from NADPH via a FAD- and FMN-containing diflavin oxidoreductase. Together with the diflavin oxidoreductase, also required for the assembly of the diferric tyrosyl radical cofactor of ribonucleotide reductase (RNR), probably by providing electrons for reduction during radical cofactor maturation in the catalytic small subunit. The sequence is that of Anamorsin homolog from Drosophila simulans (Fruit fly).